The following is a 59-amino-acid chain: Large ribosomal subunit protein bL35 (59 aa).

Residues 17-43 show a composition bias toward basic residues; that stretch reads GQIKRKHAYTSHLAPHKSTKQKRHLRK. The disordered stretch occupies residues 17–47; the sequence is GQIKRKHAYTSHLAPHKSTKQKRHLRKQATV.

Belongs to the bacterial ribosomal protein bL35 family.

In Mycoplasma genitalium (strain ATCC 33530 / DSM 19775 / NCTC 10195 / G37) (Mycoplasmoides genitalium), this protein is Large ribosomal subunit protein bL35.